Here is a 209-residue protein sequence, read N- to C-terminus: HTLV-1 basic zipper factor (209 aa).

Residues 48–162 (DGLLSLEEES…SARKEKMQEL (115 aa)) form a disordered region. Basic and acidic residues-rich tracts occupy residues 70–87 (APPR…AEEK) and 94–114 (REKE…EEKA). The Nuclear localization signal 1 signature appears at 87–92 (KRKRKK). 2 consecutive short sequence motifs (nuclear localization signal) follow at residues 116–120 (RRRRA) and 137–141 (RRERK). Residues 122 to 160 (KKAADVARRKQEEQERRERKWRQGAEKAKQHSARKEKMQ) show a composition bias toward basic and acidic residues.

The protein belongs to the HTLV-1 HBZ protein family. In terms of assembly, interacts with host ATF4; this interaction inhibits viral RNA transcriptional activation by preventing ATF4 binding to Tax-responsive elements. Interacts with host CREB1; this interaction inhibits host CREB1 transcriptional activity. Interacts with host JUN, JUNB and JUND. Interacts with host EP300.

The protein localises to the host nucleus. Its function is as follows. Contributes to the regulation of viral RNA transcription by interacting with host proteins involved in transcriptional activation such as ATF4, or CREB1, and by inhibiting their activity. Additionally, HBZ suppresses host NF-kappa-B-driven transcription mediated by host RELA as well as transcription of some classical NF-kappa-B target genes, including IL8, IL2RA, IRF4, VCAM1, and VEGFA. The polypeptide is HTLV-1 basic zipper factor (HBZ) (Homo sapiens (Human)).